Reading from the N-terminus, the 424-residue chain is Phosphomethylpyrimidine synthase (424 aa).

Substrate is bound by residues N66, M95, Y124, H163, S185–G187, D226–R229, and E265. Residue H269 participates in Zn(2+) binding. F292 contributes to the substrate binding site. Position 333 (H333) interacts with Zn(2+). Residues C408, C411, and C415 each contribute to the [4Fe-4S] cluster site.

This sequence belongs to the ThiC family. The cofactor is [4Fe-4S] cluster.

It carries out the reaction 5-amino-1-(5-phospho-beta-D-ribosyl)imidazole + S-adenosyl-L-methionine = 4-amino-2-methyl-5-(phosphooxymethyl)pyrimidine + CO + 5'-deoxyadenosine + formate + L-methionine + 3 H(+). The protein operates within cofactor biosynthesis; thiamine diphosphate biosynthesis. Catalyzes the synthesis of the hydroxymethylpyrimidine phosphate (HMP-P) moiety of thiamine from aminoimidazole ribotide (AIR) in a radical S-adenosyl-L-methionine (SAM)-dependent reaction. This Thermotoga petrophila (strain ATCC BAA-488 / DSM 13995 / JCM 10881 / RKU-1) protein is Phosphomethylpyrimidine synthase.